The chain runs to 446 residues: Maltoporin (446 aa).

The first 25 residues, 1 to 25 (MMITLRKLPLAVAVAAGVMSAQAMA), serve as a signal peptide directing secretion.

Belongs to the porin LamB (TC 1.B.3) family. In terms of assembly, homotrimer formed of three 18-stranded antiparallel beta-barrels, containing three independent channels.

It is found in the cell outer membrane. It catalyses the reaction beta-maltose(in) = beta-maltose(out). Functionally, involved in the transport of maltose and maltodextrins. The chain is Maltoporin from Escherichia coli (strain SE11).